Here is a 255-residue protein sequence, read N- to C-terminus: Triosephosphate isomerase (255 aa).

9–11 contributes to the substrate binding site; sequence NWK. His-96 acts as the Electrophile in catalysis. Catalysis depends on Glu-168, which acts as the Proton acceptor. 2 residues coordinate substrate: Gly-174 and Ser-213.

The protein belongs to the triosephosphate isomerase family. Homodimer.

Its subcellular location is the cytoplasm. It catalyses the reaction D-glyceraldehyde 3-phosphate = dihydroxyacetone phosphate. Its pathway is carbohydrate biosynthesis; gluconeogenesis. It functions in the pathway carbohydrate degradation; glycolysis; D-glyceraldehyde 3-phosphate from glycerone phosphate: step 1/1. Its function is as follows. Involved in the gluconeogenesis. Catalyzes stereospecifically the conversion of dihydroxyacetone phosphate (DHAP) to D-glyceraldehyde-3-phosphate (G3P). The chain is Triosephosphate isomerase from Buchnera aphidicola subsp. Acyrthosiphon pisum (strain APS) (Acyrthosiphon pisum symbiotic bacterium).